A 126-amino-acid polypeptide reads, in one-letter code: Ejaculatory bulb-specific protein 3 (126 aa).

An N-terminal signal peptide occupies residues 1–17; it reads MKMILALVVLGLVLVAA.

This sequence belongs to the insect A10/OS-D protein family. In terms of tissue distribution, specifically expressed in the ejaculatory bulb and seminal fluid.

The protein resides in the secreted. Functionally, protein component of the posterior mating plug. The chain is Ejaculatory bulb-specific protein 3 from Drosophila melanogaster (Fruit fly).